The sequence spans 1086 residues: MDRAPAEQNVKLSAEVEPFVPQKKNLDAFVLPMALPSDNGSVSGVEPTPIPSYLITCYPFVQENQSNRQFPLYNNDIRWQQPSPSPTGPYLAYPIISAQPPVSTEYTYYQLMPAPCAQVMGFYHPFPTPYSSTFQAANTVNAISTECTERPNQLGQAFPLSSHRSRNGNRGPVVPKPQLLQQHIKNKRPQVKNVATQKETSATGPDSRSKIVLLVDASQQTDFPSDIANKSLSESTATMLWKAKGRRRRASHPAVESSSEQGASEADIDSDSGYCSPKHNNQSAPGALRDPASGTMNRLESSGCSGGVNWPKVTCQATQKRPWMEKNQAFSRGGRQTEQRNNLQVGFRCRGHSTSSERRQNLQKRQDNKHLNSTQSHRSDPNSESLYFEDEDGFQELSENGNSKDENIQQKLSSKVLDDLPENSPINIVQTPIPITTSVPKRAKSQKKKALAAALATAQEYSEISKKSCRKLYQKQLEKTKTPVQLDLGDMLAALEKQQQAMKARQITNTRPLAHPVVTTATFHTKDSNRKTLAKSQPCVTSFNSLDITSSKAKKGKEKEIAKLKRPTALKKVILKEREEKKGRLIVEHSVLGAEEPTETHLDLTNDLPQETVSQEDAGLSMPSDASLSPASQNSPYCMTPVSQGSPASSGIGSPMASSTITKIHSKRFREYCNQVLSKEIDECVTLLLQELVSFQERIYQKDPVRAKARRRLVMGLREVTKHMKLNKIKCVIISPNCEKIQSKGGLDEALYNVIAMAREQEIPFVFALGRKALGRCVNKLVPVSVVGIFNYFGAESLFNRLVELTEEARKAYKDMVAATEQEQAEEALRSVKTVPHHMGHSRNPSAASAISFCSVISEPISEVNEKEYETNWRSMVETSDGLEPSEMEKAAPCTHSPPEKPSRLALDTSLVGKQLPLAAGSITSAPSQGKPTGDKDELKPDDLEWASQQSTETGSLDGSCRDLLNSSITSTTSTLVPGMLEEEEDEEEEEEDYSHEPTAEEVQLNSRIESWVSETQRTMETLQLGKALPGSEEDSAEQSGEEAAEVPEGLESGADSETWTPDQPPKPSSNMGKEHPDSSSPPQST.

Disordered regions lie at residues 155-207 (GQAF…GPDS), 243-386 (AKGR…SESL), 615-657 (QEDA…SPMA), 880-904 (SDGL…KPSR), and 919-1086 (AAGS…PQST). Over residues 193 to 206 (NVATQKETSATGPD) the composition is skewed to polar residues. Ser-276 carries the phosphoserine modification. Composition is skewed to polar residues over residues 294–303 (GTMNRLESSG) and 328–344 (QAFS…NNLQ). Residues 355 to 370 (SSERRQNLQKRQDNKH) are compositionally biased toward basic and acidic residues. The segment covering 624 to 657 (SDASLSPASQNSPYCMTPVSQGSPASSGIGSPMA) has biased composition (polar residues). Polar residues predominate over residues 922–931 (SITSAPSQGK). A compositionally biased stretch (basic and acidic residues) spans 933-943 (TGDKDELKPDD). The span at 947-957 (ASQQSTETGSL) shows a compositional bias: polar residues. Residues 981–994 (LEEEEDEEEEEEDY) show a composition bias toward acidic residues. Residues 1004–1022 (QLNSRIESWVSETQRTMET) show a composition bias toward polar residues. Acidic residues predominate over residues 1032–1046 (SEEDSAEQSGEEAAE).

Binds SECIS (Sec insertion sequence) elements present on selenocysteine (Sec) protein mRNAs, but does not promote Sec incorporation into selenoproteins. In Mus musculus (Mouse), this protein is Selenocysteine insertion sequence-binding protein 2-like (Secisbp2l).